The following is a 357-amino-acid chain: H-2 class I histocompatibility antigen, D-37 alpha chain (357 aa).

The N-terminal stretch at 1–20 (MLLFAHLLQLLVSATVPTQS) is a signal peptide. The interval 21 to 110 (SPHSLRYFTT…LLGYYNQSND (90 aa)) is alpha-1. Topologically, residues 21–304 (SPHSLRYFTT…EPPPSTVSNM (284 aa)) are extracellular. The N-linked (GlcNAc...) asparagine glycan is linked to asparagine 106. The alpha-2 stretch occupies residues 111–202 (ESHTLQWMYG…RLGNETLQRS (92 aa)). Cysteine 121 and cysteine 184 form a disulfide bridge. N-linked (GlcNAc...) asparagine glycosylation is present at asparagine 196. An alpha-3 region spans residues 203-294 (DPPKAHVTHH…GLPEPLTLRW (92 aa)). The Ig-like C1-type domain maps to 205–293 (PKAHVTHHPR…EGLPEPLTLR (89 aa)). A disulfide bridge connects residues cysteine 223 and cysteine 279. The connecting peptide stretch occupies residues 295-304 (EPPPSTVSNM). Residues 305–327 (VIIAVLVVLGAVIILGAVVAFVM) form a helical membrane-spanning segment. The Cytoplasmic segment spans residues 328-357 (KRRRHIGVKGCYAHVLGSKSFQTSDWPQKA). The residue at position 347 (serine 347) is a Phosphoserine.

It belongs to the MHC class I family. As to quaternary structure, heterodimer of an alpha chain and a beta chain (beta-2-microglobulin).

Its subcellular location is the membrane. Its function is as follows. Involved in the presentation of foreign antigens to the immune system. The polypeptide is H-2 class I histocompatibility antigen, D-37 alpha chain (H2-T23) (Mus musculus (Mouse)).